The sequence spans 86 residues: Omega-theraphotoxin-Hhn1f 3 (86 aa).

The first 21 residues, 1-21 (MKSIVFVALFGLALLAVACSA), serve as a signal peptide directing secretion. Positions 22–50 (SEDAHKELLKEVVRAMVVDKTDAVQAEER) are excised as a propeptide. Cystine bridges form between C52–C66, C59–C71, and C65–C78.

The protein belongs to the neurotoxin 10 (Hwtx-1) family. 17 (Hntx-9) subfamily. As to expression, expressed by the venom gland.

Its subcellular location is the secreted. Ion channel inhibitor. This is Omega-theraphotoxin-Hhn1f 3 from Cyriopagopus hainanus (Chinese bird spider).